We begin with the raw amino-acid sequence, 344 residues long: MLKNAVLLACRAPSVHNSQPWRWVAESGSEHTTVHLFVNRHRTVPATDHSGRQAIISCGAVLDHLRIAMTAAHWQANITRFPQPNQPDQLATVEFSPIDHVTAGQRNRAQAILQRRTDRLPFDSPMYWHLFEPALRDAVDKDVAMLDVVSDDQRTRLVVASQLSEVLRRDDPYYHAELEWWTSPFVLAHGVPPDTLASDAERLRVDLGRDFPVRSYQNRRAELADDRSKVLVLSTPSDTRADALRCGEVLSTILLECTMAGMATCTLTHLIESSDSRDIVRGLTRQRGEPQALIRVGIAPPLAAVPAPTPRRPLDSVLQIRQTPEKGRNASDRNARETGWFSPP.

Residues 304-344 (AVPAPTPRRPLDSVLQIRQTPEKGRNASDRNARETGWFSPP) are disordered. Over residues 323–336 (TPEKGRNASDRNAR) the composition is skewed to basic and acidic residues.

This is an uncharacterized protein from Mycobacterium tuberculosis (strain CDC 1551 / Oshkosh).